Reading from the N-terminus, the 3470-residue chain is Dynein axonemal heavy chain 5 (3470 aa).

The interval 1–1938 (MFRIGRRQLW…MIHITDVAFT (1938 aa)) is stem. The segment at 899–918 (EKVRHENASPNGDTSGGGEG) is disordered. AAA regions lie at residues 1939-2161 (YQNE…VLRT), 2221-2440 (TAIS…IQNL), 2547-2800 (VYPP…IWQG), and 2913-3167 (LYNE…FRRS). Residues 1977–1984 (GPAGTGKT) and 2259–2266 (GPSGSGKT) contribute to the ATP site. 2 coiled-coil regions span residues 3207–3241 (LKEA…VLKE) and 3434–3468 (HALA…AMTE).

The protein belongs to the dynein heavy chain family. As to quaternary structure, interacts with DNAL1. Consists of at least two heavy chains and a number of intermediate and light chains.

The protein resides in the cytoplasm. Its subcellular location is the cytoskeleton. It is found in the cilium axoneme. Force generating protein of respiratory cilia. Produces force towards the minus ends of microtubules. Dynein has ATPase activity; the force-producing power stroke is thought to occur on release of ADP. Required for structural and functional integrity of the cilia of ependymal cells lining the brain ventricles. The chain is Dynein axonemal heavy chain 5 from Rattus norvegicus (Rat).